The following is a 76-amino-acid chain: Putative protein StbC (76 aa).

The polypeptide is Putative protein StbC (stbC) (Escherichia coli).